A 316-amino-acid chain; its full sequence is Phospho-N-acetylmuramoyl-pentapeptide-transferase (316 aa).

10 helical membrane passes run 5–25, 49–69, 76–96, 116–136, 141–161, 172–192, 195–212, 221–241, 244–264, and 296–316; these read IILA…LFIP, GTPT…TLIF, LAIL…DDFL, FLLA…EVIF, TTID…VGTV, GLAA…ALFL, ITYG…LGFL, IFMG…AAVL, LPLI…SVII, and VVYA…YSLS.

Belongs to the glycosyltransferase 4 family. MraY subfamily. Requires Mg(2+) as cofactor.

Its subcellular location is the cell membrane. The enzyme catalyses UDP-N-acetyl-alpha-D-muramoyl-L-alanyl-gamma-D-glutamyl-meso-2,6-diaminopimeloyl-D-alanyl-D-alanine + di-trans,octa-cis-undecaprenyl phosphate = di-trans,octa-cis-undecaprenyl diphospho-N-acetyl-alpha-D-muramoyl-L-alanyl-D-glutamyl-meso-2,6-diaminopimeloyl-D-alanyl-D-alanine + UMP. It participates in cell wall biogenesis; peptidoglycan biosynthesis. In terms of biological role, catalyzes the initial step of the lipid cycle reactions in the biosynthesis of the cell wall peptidoglycan: transfers peptidoglycan precursor phospho-MurNAc-pentapeptide from UDP-MurNAc-pentapeptide onto the lipid carrier undecaprenyl phosphate, yielding undecaprenyl-pyrophosphoryl-MurNAc-pentapeptide, known as lipid I. The polypeptide is Phospho-N-acetylmuramoyl-pentapeptide-transferase (Thermoanaerobacter pseudethanolicus (strain ATCC 33223 / 39E) (Clostridium thermohydrosulfuricum)).